Here is a 148-residue protein sequence, read N- to C-terminus: Single-stranded DNA-binding protein 1-B, mitochondrial (148 aa).

The N-terminal 17 residues, 1–17 (MFHRPVLQVFRQFARCQ), are a transit peptide targeting the mitochondrion. One can recognise an SSB domain in the interval 30–142 (MNKVQLLGRV…IIADNIIFLT (113 aa)).

In terms of assembly, homotetramer.

Its subcellular location is the mitochondrion. It localises to the mitochondrion matrix. The protein localises to the mitochondrion nucleoid. Binds preferentially and cooperatively to pyrimidine rich single-stranded DNA (ss-DNA). Required to maintain the copy number of mitochondrial DNA (mtDNA) and plays crucial roles during mtDNA replication that stimulate activity of the DNA polymerase at the replication fork. May also function in mtDNA repair. The polypeptide is Single-stranded DNA-binding protein 1-B, mitochondrial (ssbp1-b) (Xenopus laevis (African clawed frog)).